A 97-amino-acid polypeptide reads, in one-letter code: Ig heavy chain V region 914 (97 aa).

The Ig-like domain maps to 1–97 (EVKLVESGGG…EDTAMYYCAR (97 aa)).

This chain is Ig heavy chain V region 914, found in Mus musculus (Mouse).